The primary structure comprises 471 residues: Plasmepsin VII (471 aa).

The signal sequence occupies residues 1–24; the sequence is MKSVYHHFAIIFFLKLFLCNCILS. Residues 96-438 form the Peptidase A1 domain; it reads YYGKIAIGEN…DKDNLQIGFV (343 aa). Active-site residues include Asp-115 and Asp-325.

Belongs to the peptidase A1 family.

The protein localises to the cytoplasm. This is Plasmepsin VII from Plasmodium berghei (strain Anka).